The following is a 312-amino-acid chain: MANKRKKVSVIGAGFTGATTAFLTAQKELADVVLVDIPQLENPTKGKALDMLEASPVQGFDANITGTSNYEDTAGSDVVVITAGIARKPGMSRDDLVSTNEKIMRSVTREIVKYSPEAIIVVLTNPVDAMTYAVYKESGLPKEKVIGQSGILDTARFRTFVAQELNLSVKDVTGFVLGGHGDDMVPLVRYSYAGGIPLETLIPKERIDAIVERTRKGGGEIVNLLGNGSAYYAPAASLVEMVEAILKDQRRVMPTIAYLEGEYGYEGIYLGVPTIVGGNGLEQIIELELTEEERSQLDRSVESVKNVMKVLS.

NAD(+)-binding positions include 12 to 17 and Asp-36; that span reads GAGFTG. Arg-87 and Arg-93 together coordinate substrate. NAD(+)-binding positions include Asn-100 and 123 to 125; that span reads LTN. Substrate is bound at residue Asn-125. The residue at position 149 (Ser-149) is a Phosphoserine. Arg-156 contributes to the substrate binding site. Catalysis depends on His-180, which acts as the Proton acceptor.

This sequence belongs to the LDH/MDH superfamily. MDH type 3 family.

The catalysed reaction is (S)-malate + NAD(+) = oxaloacetate + NADH + H(+). Catalyzes the reversible oxidation of malate to oxaloacetate. The chain is Malate dehydrogenase from Bacillus pumilus (strain SAFR-032).